Reading from the N-terminus, the 2377-residue chain is MSDGAAEKQSGTPGFLTPPAPVPKNGSSSDSSVGEKLGATVADSGVGRTEEYRRRRHTMDKDSRGAAATTTPTEHRFFRRSVICDSNATALELPGLPLSIPQPSVPAVVPQSAPPEPHREETLTATVASQVSQQPSAAASPGEQAVVGSATTTVPSSTSKDRPVSQPSLVGSKEEPPPSRSGSGSGGASAKEAQEDRSQQQDDIEELETKAVGMSNDGRFLKFDIEIGRGSFKTVYKGLDTETTVEVAWCELQDRKLTKSERQRFKEEAEMLKGLQHPNIVRFYDSWESTVKGKKCIVLVTELMTSGTLKTYLKRFKVMKIKVLRSWCRQILKGLQFLHTRTPPIIHRDLKCDNIFITGPTGSVKIGDLGLATLKRASFAKSVIGTPEFMAPEMYEEKYDESVDVYAFGMCMLEMATSEYPYSECQNAAQIYRRVTSGVKPASFDKVAIPEVKEIIEGCIRQNKDERYSIKDLLNHAFFQEETGVRVELAEEDDGEKIAIKLWLRIEDIKKLKGKYKDNEAIEFSFDLERDVPEDVAQEMVESGYVCEGDHKTMAKAIKDRVSLIKRKREQRQLVREEQEKRKQEESSFKQQNEQQASVSQAGIQQLSAASTGIPTAPATSASVSTQVEPEEPEADQHQQLQYQQPSISVLSDGTIDSGQGSSVFTESRVSSQQTVSYGSQHEQAHSTGTAPGHTVSSIQAQSQPHGVYPPSSMAQGQNQGQPSSSLAGVLSSQPIQHPQQQGIQPTVPSQQAVQYSLPQAASSSEGTTAQPVSQPQVSAGTQLPVSQTVATVQGEPHIPVSTQPSVVPVHSGAHFLPMGQPIPTSLLPQYPVSQIPISTPHVSTAQTGFSSVPITMAAGINQPLLTLASSATASSIPGGSPVVPNQLPTLLQPVNQLQSQVHPQLLQPTTVQSIGIPANLGQAAEGPLPSGDVLYQGFPSRLPPQYPGDSNIAPSSNVASVCIHSTVLAPPSMPTEALATQGYFPTVVQPYVESTPLVPMGSVGGQVQVSQPAVSLTQQPPTTSSQQAVLESTQGVSQAAPPEQTPITQSQPTQPVPLVTSADSAHSDVASGMSDGNENAPSSSGRHEGRTTKRHYRKSVRSRSRHEKTSRPKLRILNVSNKGDRVVECQLETHNRKMVTFKFDLDGDNPEEIATIMVNNDFILAIERESFVAQVREIIEKADEMLSEDVSVEPEGDQGLESLQGKDDYGFPGSQKLEGEFKQPIAVSSMPQQIGVPTSSLTQVVHSAGRRFIVSPVPESRLRESKVFTSDISDPVVASTSQAPGMNLSHSASSLSLQQAFSELKHGQMTEGPNTAPPNFNHMAGPTFSPFLASIAGVQTVAASTPSVSVPITSSPLNDISTSVMQSETALPTEKGIVGVTTTSTGVVASGGLTTMSVSESPTSSSAVSSSTVPAVVTVSTPSQPVQASTSGSIASSTGSFPPGTFSTTTATTMGSVVAPDAKPPTVLLQQVASNTAGVAIVTSVSTTTPFPGMASQPSLPLSSSTSAPTLAETMVVSAHSLDKASHSSTAGLGLSFCAPSSSSSSGTAVSTSVSQPGMVHPLVISSAVVSTPGLPQPVVPTSTPLLPQVPNIPPLVQPVVNVPAVQQTLIHSQPQPALLPNQPHTHCPEMDADTQSKAPGIDDIKTLEEKLRSLFSEHSSSGTQHASVSLETPLVVETTVTPGITTTAVAPSKLMTSTTSTCLPPTSLPLGAAGMPVMPVGTPGQVSTPGTHASAPVGTATGVKPGTTPPKPTKTVVPPVGTELSAGTVPCEQLPPFPGPSLIQSQQPLEDLDAQLRRTLSPETITVAPAVGPLSTMSSTTVTEAGTRLQKDGTEGHVTATSSGAGVVKMGRFQVSVTMDDAQKERKNRSEDTKSVHFESSTSESSVLSSSSPESTLVKPEPNGISISGISLDVPDSTHKAPTPEAKSDAGQPTKVGRFQVTTTANKVGRFSVSRTEDKVTELKKEGPVTSPPFRDSEQTVIPAVIPKKEKPELAEPSHLNGPSSDLEAAFLSRGTEDGSGSPHSPPHLCSKSLPVQNLSQSLSNSFNSSYMSSDNESDIEDEDLRLELRRLREKHLKEIQDLQSRQKHEIESLYTKLGKVPPAVIIPPAAPLSGRRRRPTKSKGSKSSRSSSLGNKSPQLSGNLSGQSGTSVLHPQQTLHPAGNTPETGHNQLLQPLKPSPSSDNLYSAFTSDGAISVPSLSAPGQGTSSTNTVGGTVSSQAAQAQPPAMTSSRKGTFTDDLHKLVDNWARDAMNLSGRRGSKGHMNYEGPGMARKFSAPGQLCVPMTSNLGGSTPISAASATSLGHFTKSMCPPQQYGFPPAPFGTQWSGTGGPAPQPLGQFQPVGTASLQNFNISNLQKSISNPPGSNLRTT.

Disordered stretches follow at residues 1–79 and 93–203; these read MSDG…RFFR and LPGL…QQDD. T17 and T58 each carry phosphothreonine. Basic and acidic residues predominate over residues 48–64; that stretch reads RTEEYRRRRHTMDKDSR. 2 stretches are compositionally biased toward low complexity: residues 101–111 and 127–141; these read PQPSVPAVVPQ and VASQVSQQPSAAASP. Positions 149–158 are enriched in polar residues; the sequence is SATTTVPSST. Phosphoserine is present on residues S165 and S172. The 259-residue stretch at 221–479 folds into the Protein kinase domain; that stretch reads LKFDIEIGRG…IKDLLNHAFF (259 aa). S231 lines the ATP pocket. Chloride-binding residues include F283 and L299. Residues 301-304 and K351 contribute to the ATP site; that span reads TELM. The active-site Proton acceptor is D368. Chloride is bound by residues L369 and L371. Phosphoserine; by autocatalysis is present on residues S378 and S382. Residues 488–555 are autoinhibitory domain; the sequence is ELAEEDDGEK…VCEGDHKTMA (68 aa). The segment covering 573-588 has biased composition (basic and acidic residues); the sequence is QLVREEQEKRKQEESS. 2 disordered regions span residues 573–782 and 1013–1114; these read QLVR…SAGT and PAVS…SRPK. 3 stretches are compositionally biased toward polar residues: residues 593 to 628, 638 to 705, and 713 to 733; these read NEQQASVSQAGIQQLSAASTGIPTAPATSASVSTQV, HQQL…QSQP, and SMAQGQNQGQPSSSLAGVLSS. The segment at 629-639 is interaction with KLHL3; it reads EPEEPEADQHQ. A compositionally biased stretch (low complexity) spans 734–746; the sequence is QPIQHPQQQGIQP. The segment covering 747–782 has biased composition (polar residues); the sequence is TVPSQQAVQYSLPQAASSSEGTTAQPVSQPQVSAGT. Positions 1018–1028 are enriched in low complexity; that stretch reads TQQPPTTSSQQ. The span at 1029 to 1038 shows a compositional bias: polar residues; the sequence is AVLESTQGVS. Over residues 1042–1058 the composition is skewed to low complexity; sequence PPEQTPITQSQPTQPVP. Positions 1075-1085 are enriched in polar residues; sequence SDGNENAPSSS. A compositionally biased stretch (basic residues) spans 1093–1114; it reads TKRHYRKSVRSRSRHEKTSRPK. An RFXV motif 1 motif is present at residues 1252 to 1255; the sequence is RFIV. Position 1256 is a phosphoserine (S1256). Disordered regions lie at residues 1726–1760 and 1818–1847; these read GQVSTPGTHASAPVGTATGVKPGTTPPKPTKTVVP and TMSSTTVTEAGTRLQKDGTEGHVTATSSGA. The span at 1738–1748 shows a compositional bias: low complexity; the sequence is PVGTATGVKPG. T1843 is modified (phosphothreonine). Residues 1854–1857 carry the RFXV motif 2 motif; sequence RFQV. Residues 1860–1945 form a disordered region; sequence TMDDAQKERK…TKVGRFQVTT (86 aa). Positions 1863 to 1879 are enriched in basic and acidic residues; sequence DAQKERKNRSEDTKSVH. A compositionally biased stretch (low complexity) spans 1882–1900; the sequence is SSTSESSVLSSSSPESTLV. Short sequence motifs (RFXV motif) lie at residues 1940-1943 and 1952-1955; these read RFQV and RFSV. Over residues 1959–1969 the composition is skewed to basic and acidic residues; that stretch reads EDKVTELKKEG. 5 disordered regions span residues 1959-1984, 1989-2008, 2015-2064, 2107-2191, and 2203-2239; these read EDKVTELKKEGPVTSPPFRDSEQTVI, PKKEKPELAEPSHLNGPSSD, SRGT…DIED, VIIP…NLYS, and SLSAPGQGTSSTNTVGGTVSSQAAQAQPPAMTSSRKG. S1973 bears the Phosphoserine mark. Residues 1989–1998 show a composition bias toward basic and acidic residues; sequence PKKEKPELAE. A phosphoserine mark is found at S2006, S2007, S2022, S2024, and S2027. The segment covering 2035 to 2057 has biased composition (low complexity); the sequence is SLPVQNLSQSLSNSFNSSYMSSD. S2116 is subject to Phosphoserine. Residues 2117–2129 show a composition bias toward basic residues; that stretch reads GRRRRPTKSKGSK. Residues 2130–2140 show a composition bias toward low complexity; the sequence is SSRSSSLGNKS. The segment covering 2141 to 2191 has biased composition (polar residues); sequence PQLSGNLSGQSGTSVLHPQQTLHPAGNTPETGHNQLLQPLKPSPSSDNLYS. Low complexity predominate over residues 2208–2232; the sequence is GQGTSSTNTVGGTVSSQAAQAQPPA. The segment at 2236–2256 is amphipathic alpha-helix; the sequence is SRKGTFTDDLHKLVDNWARDA. A phosphoserine mark is found at S2265 and S2281. Positions 2325 to 2344 are disordered; the sequence is PAPFGTQWSGTGGPAPQPLG. Phosphoserine is present on residues S2365 and S2367.

This sequence belongs to the protein kinase superfamily. Ser/Thr protein kinase family. WNK subfamily. In terms of assembly, interacts with WNK3. Interacts with WNK4; inhibiting the activity of WNK4. Interacts with SGK1; promoting its activation. Associates with the mTORC2 complex. Interacts with UVRAG. As to quaternary structure, interacts with isoform 1; inhibiting isoform 1 activity. It depends on Mg(2+) as a cofactor. Post-translationally, autophosphorylated at Ser-378 and Ser-382, promoting its activity. Autophosphorylation at Ser-382 is inhibited by intracellular calcium. Phosphorylation at Thr-58 increases ability to activate SGK1. In terms of processing, ubiquitinated by the BCR(KLHL3) complex, leading to its degradation. Also ubiquitinated by the BCR(KLHL2) complex. May be O-glycosylated. Widely expressed in both adult and embryonic tissue, with highest levels observed in the testis and lower levels in heart, lung, kidney, placenta, brain and skeletal muscle. Expressed in pancreatic duct. Two isoforms are expressed in heart, a single shorter isoform in the kidney. Locates to the distal convoluted tubule, the medullary collecting duct and the cortical collecting duct of the kidney. In terms of tissue distribution, restricted to the nervous system, expressed preferentially in sensory neurons than in motor neurons and in general more abundant in axons than in cell bodies (at protein level). In the DRG, predominantly expressed in the satellite cells that envelop sensory neurons, but low expression also observed in the cell bodies of neurons (at protein level). In the sciatic nerve, expressed in the Schwann cells that surround axons and in a mosaic distribution of axons (at protein level). In the spinal cord, expressed in superficial layers (LI and LII), as well as in the fibers of the Lissauer tract (at protein level). Also detected in the axon fibers of dorsolateral funiculus and lateral funiculus (at protein level).

The protein localises to the cytoplasm. Its subcellular location is the nucleus. The protein resides in the cytoskeleton. It localises to the spindle. It carries out the reaction L-seryl-[protein] + ATP = O-phospho-L-seryl-[protein] + ADP + H(+). It catalyses the reaction L-threonyl-[protein] + ATP = O-phospho-L-threonyl-[protein] + ADP + H(+). Its activity is regulated as follows. Activated in response to hyperosmotic stress: cell shrinkage promotes formation of a membraneless compartment that concentrates WNK1 with its substrates, OXSR1/OSR1 and STK39/SPAK. Activation requires autophosphorylation of Ser-382 and, to a lower extent, Ser-378. Autophosphorylation and subsequent activation is inhibited by increases in intracellular ionic strength: Cl(-) potently inhibits WNK1 kinase activity via direct binding. Also inhibited by K(+) ions. In terms of biological role, serine/threonine-protein kinase component of the WNK1-SPAK/OSR1 kinase cascade, which acts as a key regulator of blood pressure and regulatory volume increase by promoting ion influx. WNK1 mediates regulatory volume increase in response to hyperosmotic stress by acting as a molecular crowding sensor, which senses cell shrinkage and mediates formation of a membraneless compartment by undergoing liquid-liquid phase separation. The membraneless compartment concentrates WNK1 with its substrates, OXSR1/OSR1 and STK39/SPAK, promoting WNK1-dependent phosphorylation and activation of downstream kinases OXSR1/OSR1 and STK39/SPAK. Following activation, OXSR1/OSR1 and STK39/SPAK catalyze phosphorylation of ion cotransporters SLC12A1/NKCC2, SLC12A2/NKCC1, SLC12A5/KCC2 and SLC12A6/KCC3, regulating their activity. Phosphorylation of Na-K-Cl cotransporters SLC12A2/NKCC1 and SLC12A2/NKCC1 promote their activation and ion influx; simultaneously, phosphorylation of K-Cl cotransporters SLC12A5/KCC2 and SLC12A6/KCC3 inhibit their activity, blocking ion efflux. Also acts as a regulator of angiogenesis in endothelial cells. Also acts independently of the WNK1-SPAK/OSR1 kinase cascade by catalyzing phosphorylation of other substrates, such as SYT2, PCF11 and NEDD4L. Mediates phosphorylation of SYT2, regulating SYT2 association with phospholipids and membrane-binding. Regulates mRNA export in the nucleus by mediating phosphorylation of PCF11, thereby decreasing the association between PCF11 and POLR2A/RNA polymerase II and promoting mRNA export to the cytoplasm. Acts as a negative regulator of autophagy. Required for the abscission step during mitosis, independently of the WNK1-SPAK/OSR1 kinase cascade. WNK1 may also play a role in actin cytoskeletal reorganization. Also acts as a scaffold protein independently of its protein kinase activity: negatively regulates cell membrane localization of various transporters and channels, such as SLC4A4, SLC26A6, SLC26A9, TRPV4 and CFTR. Involved in the regulation of epithelial Na(+) channel (ENaC) by promoting activation of SGK1 in a kinase-independent manner: probably acts as a scaffold protein that promotes the recruitment of SGK1 to the mTORC2 complex in response to chloride, leading to mTORC2-dependent phosphorylation and activation of SGK1. Acts as an assembly factor for the ER membrane protein complex independently of its protein kinase activity: associates with EMC2 in the cytoplasm via its amphipathic alpha-helix, and prevents EMC2 ubiquitination and subsequent degradation, thereby promoting EMC2 stabilization. Functionally, kinase-defective isoform specifically expressed in kidney, which acts as a dominant-negative regulator of the longer isoform 1. Does not directly inhibit WNK4 and has no direct effect on sodium and chloride ion transport. Down-regulates sodium-chloride cotransporter activity indirectly by inhibiting isoform 1, it associates with isoform 1 and attenuates its kinase activity. In kidney, may play an important role regulating sodium and potassium balance. This Mus musculus (Mouse) protein is Serine/threonine-protein kinase WNK1.